The sequence spans 459 residues: Putrescine aminotransferase (459 aa).

Residues 150–151 (GT) and Gln274 contribute to the pyridoxal 5'-phosphate site. Lys300 is subject to N6-(pyridoxal phosphate)lysine. Residue Thr332 coordinates pyridoxal 5'-phosphate.

The protein belongs to the class-III pyridoxal-phosphate-dependent aminotransferase family. Putrescine aminotransferase subfamily. Pyridoxal 5'-phosphate serves as cofactor.

The enzyme catalyses an alkane-alpha,omega-diamine + 2-oxoglutarate = an omega-aminoaldehyde + L-glutamate. The catalysed reaction is putrescine + 2-oxoglutarate = 1-pyrroline + L-glutamate + H2O. It catalyses the reaction cadaverine + 2-oxoglutarate = 5-aminopentanal + L-glutamate. The protein operates within amine and polyamine degradation; putrescine degradation; 4-aminobutanal from putrescine (transaminase route): step 1/1. In terms of biological role, catalyzes the aminotransferase reaction from putrescine to 2-oxoglutarate, leading to glutamate and 4-aminobutanal, which spontaneously cyclizes to form 1-pyrroline. This is the first step in one of two pathways for putrescine degradation, where putrescine is converted into 4-aminobutanoate (gamma-aminobutyrate or GABA) via 4-aminobutanal. Also functions as a cadaverine transaminase in a a L-lysine degradation pathway to succinate that proceeds via cadaverine, glutarate and L-2-hydroxyglutarate. This is Putrescine aminotransferase from Klebsiella pneumoniae (strain 342).